Consider the following 197-residue polypeptide: Guanylate kinase (197 aa).

S2 is subject to N-acetylserine. One can recognise a Guanylate kinase-like domain in the interval P4–S186. G14 to T19 contributes to the ATP binding site. S37–K51 serves as a coordination point for substrate. Residues R44, R137, and R148 contribute to the active site. Residue R137 coordinates ATP. Residue N171–D172 participates in ATP binding.

Belongs to the guanylate kinase family. Monomer. Interacts with RD3. In terms of tissue distribution, widely expressed.

The protein resides in the photoreceptor inner segment. The protein localises to the cytoplasm. It is found in the cytosol. Its subcellular location is the mitochondrion. The enzyme catalyses GMP + ATP = GDP + ADP. Its activity is regulated as follows. Up-regulated by RD3. In terms of biological role, catalyzes the phosphorylation of GMP to GDP. Essential enzyme for recycling GMP and indirectly, cyclic GMP (cGMP). Involved in the cGMP metabolism in photoreceptors. It may also have a role in the survival and growth progression of some tumors. In addition to its physiological role, GUK1 is essential for converting prodrugs used for the treatment of cancers and viral infections into their pharmacologically active metabolites, most notably acyclovir, ganciclovir, and 6-thioguanine and its closely related analog 6-mercaptopurine. This is Guanylate kinase from Homo sapiens (Human).